The following is an 84-amino-acid chain: Small ribosomal subunit protein bS16 (84 aa).

The protein belongs to the bacterial ribosomal protein bS16 family.

In Acaryochloris marina (strain MBIC 11017), this protein is Small ribosomal subunit protein bS16.